The primary structure comprises 423 residues: MLDVKFIRDNLDQAEAALATRGGAISLARFRELDAQRRKLLTESETLKALKNSVSEEIAKVKDKSTVKDKIAEMKEVSAKIKTFDDELKIVEEEFDTLLMTIPNLPHPTTPVGKSEEENVIVRSWGSLPEMAFEPKPHWDLAEDLDILDFERATKITGARFCLSKRAGARLERALISFMLDLHSTEHGYTEVLPPFMVNRASMTGTGQLPKFEEDLFRLMDPEYFLIPTAEVPVTNIHRDEILKKSDLPISYTAYTPCFRREAGSYGKDTRGLIRQHQFNKVELVKFVHPDESQAELEKLTGHAEKVLQLLELPYRVMALCSGDIGFSACKTYDLEVWLPSQNTYREISSCSSFGDFQARRAGIRFREDEKSKPEFVHTLNGSGLAVGRTLVAILENYQQADGSIIIPTALRPYMGGIEKITK.

229–231 (TAE) contacts L-serine. 260 to 262 (RRE) provides a ligand contact to ATP. Glu283 serves as a coordination point for L-serine. 347–350 (EISS) lines the ATP pocket. Residue Ser383 participates in L-serine binding.

The protein belongs to the class-II aminoacyl-tRNA synthetase family. Type-1 seryl-tRNA synthetase subfamily. In terms of assembly, homodimer. The tRNA molecule binds across the dimer.

Its subcellular location is the cytoplasm. The catalysed reaction is tRNA(Ser) + L-serine + ATP = L-seryl-tRNA(Ser) + AMP + diphosphate + H(+). It carries out the reaction tRNA(Sec) + L-serine + ATP = L-seryl-tRNA(Sec) + AMP + diphosphate + H(+). Its pathway is aminoacyl-tRNA biosynthesis; selenocysteinyl-tRNA(Sec) biosynthesis; L-seryl-tRNA(Sec) from L-serine and tRNA(Sec): step 1/1. In terms of biological role, catalyzes the attachment of serine to tRNA(Ser). Is also able to aminoacylate tRNA(Sec) with serine, to form the misacylated tRNA L-seryl-tRNA(Sec), which will be further converted into selenocysteinyl-tRNA(Sec). The sequence is that of Serine--tRNA ligase from Trichlorobacter lovleyi (strain ATCC BAA-1151 / DSM 17278 / SZ) (Geobacter lovleyi).